Reading from the N-terminus, the 55-residue chain is Cortexin domain containing 2 (55 aa).

A helical transmembrane segment spans residues 16–36 (FAIAFVVLLFLFLIVMIFRCA).

Its subcellular location is the membrane. The polypeptide is Cortexin domain containing 2 (Homo sapiens (Human)).